Here is a 223-residue protein sequence, read N- to C-terminus: uncharacterized protein (223 aa).

This is an uncharacterized protein from Dryophytes versicolor (chameleon treefrog).